Here is a 268-residue protein sequence, read N- to C-terminus: MEMKKKINLELRNRSPEEVTELVLDNCLCVNGEIEGLNDTFKELEFLSMANVELSSLARLPSLNKLRKLELSDNIISGGLEVLAEKCPNLTYLNLSGNKIKDLSTVEALQNLKNLKSLDLFNCEITNLEDYRESIFELLQQITYLDGFDQEDNEAPDSEEEDDEDGDEDDEEEEENEAGPPEGYEEEEEEEEEEDEDEDEDEDEAGSELGEGEEEVGLSYLMKEEIQDEEDDDDYVEEGEEEEEEEEGGLRGEKRKRDAEDDGEEEDD.

N-acetylmethionine is present on methionine 1. 4 LRR repeats span residues 18 to 38 (EVTE…EGLN), 43 to 64 (ELEF…PSLN), 65 to 87 (KLRK…AEKC), and 89 to 110 (NLTY…EALQ). Lysine 68 participates in a covalent cross-link: Glycyl lysine isopeptide (Lys-Gly) (interchain with G-Cter in SUMO2). In terms of domain architecture, LRRCT spans 123–161 (CEITNLEDYRESIFELLQQITYLDGFDQEDNEAPDSEEE). Acidic residues-rich tracts occupy residues 149 to 216 (DQED…EEEV) and 226 to 247 (IQDE…EEEE). The disordered stretch occupies residues 149–268 (DQEDNEAPDS…AEDDGEEEDD (120 aa)). Residues 215–268 (EVGLSYLMKEEIQDEEDDDDYVEEGEEEEEEEEGGLRGEKRKRDAEDDGEEEDD) are ZID domain. The span at 248 to 259 (GGLRGEKRKRDA) shows a compositional bias: basic and acidic residues.

This sequence belongs to the ANP32 family. Interacts with the importin alpha KPNA1 and KPNA2. Component of a SWR1-like complex, composed of EP400, KAT5/TIP60, TRRAP, BRD8, RUVBL1, RUVBL2, ING3 and ANP32E; the complex does not contain SRCAP. Interacts with H2A.Z/H2AZ1. Post-translationally, phosphorylated. The phosphorylation is nuclear localization signal (NLS)-dependent. In terms of tissue distribution, expressed in peripheral blood leukocytes, colon, small intestine, prostate, thymus, spleen, skeletal muscle, liver and kidney.

It is found in the cytoplasm. The protein localises to the nucleus. Functionally, histone chaperone that specifically mediates the genome-wide removal of histone H2A.Z/H2AZ1 from the nucleosome: removes H2A.Z/H2AZ1 from its normal sites of deposition, especially from enhancer and insulator regions. Not involved in deposition of H2A.Z/H2AZ1 in the nucleosome. May stabilize the evicted H2A.Z/H2AZ1-H2B dimer, thus shifting the equilibrium towards dissociation and the off-chromatin state. Inhibits activity of protein phosphatase 2A (PP2A). Does not inhibit protein phosphatase 1. May play a role in cerebellar development and synaptogenesis. The protein is Acidic leucine-rich nuclear phosphoprotein 32 family member E (ANP32E) of Homo sapiens (Human).